A 94-amino-acid polypeptide reads, in one-letter code: Small ribosomal subunit protein uS19 (94 aa).

Belongs to the universal ribosomal protein uS19 family.

Protein S19 forms a complex with S13 that binds strongly to the 16S ribosomal RNA. The polypeptide is Small ribosomal subunit protein uS19 (Clostridium botulinum (strain Langeland / NCTC 10281 / Type F)).